Reading from the N-terminus, the 391-residue chain is Pyoverdine export membrane fusion protein PvdR (391 aa).

An N-terminal signal peptide occupies residues 1–24; it reads MRRTRSTRRALLVAVCLSPLIALA. Positions 108–180 form a coiled coil; sequence IEMLKAQLAE…QASLRSDEAE (73 aa). The disordered stretch occupies residues 263–289; sequence LPVPPKPLDQSNQGGGSPTSGSGGQSG. Positions 275–289 are enriched in gly residues; it reads QGGGSPTSGSGGQSG.

Belongs to the membrane fusion protein (MFP) (TC 8.A.1) family. As to quaternary structure, part of the tripartite efflux system PvdRT-OpmQ, which is composed of an inner membrane component with both ATPase and permease domains, PvdT, a periplasmic membrane fusion protein, PvdR, and an outer membrane component, OpmQ.

Its subcellular location is the periplasm. Its function is as follows. Part of the tripartite efflux system PvdRT-OpmQ required for the secretion into the extracellular milieu of the siderophore pyoverdine (PVD), which is involved in iron acquisition. This subunit is an adapter protein that stimulates the ATPase activity of PvdT and connects the inner and outer membrane components. The system is responsible for export of newly synthesized PVD after the final steps of biosynthesis have taken place in the periplasm. It is also responsible for recycling of PVD after internalization of ferri-PVD into the periplasm by the outer-membrane receptor FpvA and release of iron from PVD, thus making PVD available for new cycles of iron uptake. In addition, can expel unwanted metals complexed with PVD from the periplasm into the extracellular medium. Does not contribute to resistance to antibiotics belonging to the classes of tetracyclines, aminoglycosides, beta-lactams and macrolides, and chloramphenicol. The chain is Pyoverdine export membrane fusion protein PvdR from Pseudomonas aeruginosa (strain ATCC 15692 / DSM 22644 / CIP 104116 / JCM 14847 / LMG 12228 / 1C / PRS 101 / PAO1).